A 232-amino-acid polypeptide reads, in one-letter code: Ribosome maturation protein SDO1 homolog (232 aa).

This sequence belongs to the SDO1/SBDS family.

This Methanothermobacter thermautotrophicus (strain ATCC 29096 / DSM 1053 / JCM 10044 / NBRC 100330 / Delta H) (Methanobacterium thermoautotrophicum) protein is Ribosome maturation protein SDO1 homolog.